A 332-amino-acid polypeptide reads, in one-letter code: Ketol-acid reductoisomerase (NADP(+)) (332 aa).

Residues 1 to 182 (MAQTWKDTDI…GSARAGLIKT (182 aa)) form the KARI N-terminal Rossmann domain. Residues 25 to 28 (YGIQ), Lys-48, Ser-53, and 83 to 86 (DMIQ) each bind NADP(+). Residue His-108 is part of the active site. Gly-134 serves as a coordination point for NADP(+). Residues 183–329 (AFKEEVETDW…KEMRKMMWPD (147 aa)) enclose the KARI C-terminal knotted domain. Residues Asp-191, Glu-195, Glu-227, and Glu-231 each contribute to the Mg(2+) site. Ser-252 contacts substrate.

It belongs to the ketol-acid reductoisomerase family. It depends on Mg(2+) as a cofactor.

The catalysed reaction is (2R)-2,3-dihydroxy-3-methylbutanoate + NADP(+) = (2S)-2-acetolactate + NADPH + H(+). The enzyme catalyses (2R,3R)-2,3-dihydroxy-3-methylpentanoate + NADP(+) = (S)-2-ethyl-2-hydroxy-3-oxobutanoate + NADPH + H(+). It functions in the pathway amino-acid biosynthesis; L-isoleucine biosynthesis; L-isoleucine from 2-oxobutanoate: step 2/4. Its pathway is amino-acid biosynthesis; L-valine biosynthesis; L-valine from pyruvate: step 2/4. In terms of biological role, involved in the biosynthesis of branched-chain amino acids (BCAA). Catalyzes an alkyl-migration followed by a ketol-acid reduction of (S)-2-acetolactate (S2AL) to yield (R)-2,3-dihydroxy-isovalerate. In the isomerase reaction, S2AL is rearranged via a Mg-dependent methyl migration to produce 3-hydroxy-3-methyl-2-ketobutyrate (HMKB). In the reductase reaction, this 2-ketoacid undergoes a metal-dependent reduction by NADPH to yield (R)-2,3-dihydroxy-isovalerate. The protein is Ketol-acid reductoisomerase (NADP(+)) of Nitrosopumilus maritimus (strain SCM1).